The chain runs to 328 residues: MLEDYYPSTTSYYHGGIDDDLYTAKWGMVMTFLDLNDSSLTPFEGTHFALIGFKSDKGVYINNGRVGAVESPAAIRTQLAKFPWHLGNQVMVYDVGNIDGPNRSLEQLQNSLSKAIKRMCDFNLKPIVLGGGHETAYGHYLGLRQSLSPSDDLAVINMDAHFDLRPYGQTGPNSGTGFRQMFDDAVADKRLFKYFVLGIQEHNNNLFLFDFVAKSKGIQFLTGQDIYQMGHQKVCRAIDRFLEGQERVYLTIDMDCFSVGAAPGVSAIQSLGVDPNLAVLVLQHIAASGKLVGFDVVEVSPPHDIDNHTANLAATFIFYLVQIMAQHR.

Residues His133, Asp159, His161, Asp163, Asp253, and Asp255 each contribute to the Mn(2+) site.

Belongs to the arginase family. Requires Mn(2+) as cofactor.

The catalysed reaction is N-formimidoyl-L-glutamate + H2O = formamide + L-glutamate. The protein operates within amino-acid degradation; L-histidine degradation into L-glutamate; L-glutamate from N-formimidoyl-L-glutamate (hydrolase route): step 1/1. Functionally, catalyzes the conversion of N-formimidoyl-L-glutamate to L-glutamate and formamide. The sequence is that of Formimidoylglutamase from Streptococcus pyogenes serotype M5 (strain Manfredo).